A 228-amino-acid polypeptide reads, in one-letter code: DNA-binding response regulator MtrA (228 aa).

The region spanning 7–120 is the Response regulatory domain; the sequence is RILVVDDDPS…ELVARVRARL (114 aa). A 4-aspartylphosphate modification is found at Asp56. Positions 128 to 227 form a DNA-binding region, ompR/PhoB-type; the sequence is AEMLSIGDVE…VRGVGYKAGP (100 aa).

Probably a monomer when inactive, phosphorylation may permit it to oligomerize. The monomeric form does not seem to be phosphorylated. Post-translationally, phosphorylated by MtrB.

The protein resides in the cytoplasm. Member of the two-component regulatory system MtrA/MtrB, responding to environmental signals. Controls expression of a number of genes including dnaA, ripA, fbpB and probably itself. Probably plays a role in cell division. The sequence is that of DNA-binding response regulator MtrA (mtrA) from Mycolicibacterium smegmatis (strain ATCC 700084 / mc(2)155) (Mycobacterium smegmatis).